The chain runs to 658 residues: Integrator complex subunit 9 (658 aa).

1D-myo-inositol hexakisphosphate contacts are provided by Lys-2 and Phe-19. Residue Lys-58 forms a Glycyl lysine isopeptide (Lys-Gly) (interchain with G-Cter in SUMO2) linkage. 2 residues coordinate 1D-myo-inositol hexakisphosphate: Lys-510 and Arg-511. Residues 548-574 (DNKHLLQPPPRPAQPTSGKKRKRVSDD) form a disordered region. The short motif at 566–570 (KKRKR) is the Nuclear localization signal element.

This sequence belongs to the metallo-beta-lactamase superfamily. RNA-metabolizing metallo-beta-lactamase-like family. INTS9 subfamily. Component of the Integrator complex, composed of core subunits INTS1, INTS2, INTS3, INTS4, INTS5, INTS6, INTS7, INTS8, INTS9/RC74, INTS10, INTS11/CPSF3L, INTS12, INTS13, INTS14 and INTS15. The core complex associates with protein phosphatase 2A subunits PPP2CA and PPP2R1A, to form the Integrator-PP2A (INTAC) complex. INTS9 is part of the RNA endonuclease subcomplex, composed of INTS4, INTS9, INTS11 and inositol hexakisphosphate (InsP6). Interacts with WDR73; interaction is required for the assembly of the RNA endonuclease subcomplex in the cytoplasm. Interacts with BRAT1; interaction is required for the assembly of the RNA endonuclease subcomplex. Interacts with ESRRB, ESRRB is not a core component of the Integrator complex and this association is a bridge for the interaction with the multiprotein complex Integrator; attracts the transcriptional machinery.

Its subcellular location is the nucleus. It is found in the cytoplasm. Its function is as follows. Component of the integrator complex, a multiprotein complex that terminates RNA polymerase II (Pol II) transcription in the promoter-proximal region of genes. The integrator complex provides a quality checkpoint during transcription elongation by driving premature transcription termination of transcripts that are unfavorably configured for transcriptional elongation: the complex terminates transcription by (1) catalyzing dephosphorylation of the C-terminal domain (CTD) of Pol II subunit POLR2A/RPB1 and SUPT5H/SPT5, (2) degrading the exiting nascent RNA transcript via endonuclease activity and (3) promoting the release of Pol II from bound DNA. The integrator complex is also involved in terminating the synthesis of non-coding Pol II transcripts, such as enhancer RNAs (eRNAs), small nuclear RNAs (snRNAs), telomerase RNAs and long non-coding RNAs (lncRNAs). Mediates recruitment of cytoplasmic dynein to the nuclear envelope, probably as component of the integrator complex. The chain is Integrator complex subunit 9 from Homo sapiens (Human).